The primary structure comprises 360 residues: UDP-3-O-acylglucosamine N-acyltransferase (360 aa).

The active-site Proton acceptor is histidine 248.

It belongs to the transferase hexapeptide repeat family. LpxD subfamily. Homotrimer.

It catalyses the reaction a UDP-3-O-[(3R)-3-hydroxyacyl]-alpha-D-glucosamine + a (3R)-hydroxyacyl-[ACP] = a UDP-2-N,3-O-bis[(3R)-3-hydroxyacyl]-alpha-D-glucosamine + holo-[ACP] + H(+). It functions in the pathway bacterial outer membrane biogenesis; LPS lipid A biosynthesis. Its function is as follows. Catalyzes the N-acylation of UDP-3-O-acylglucosamine using 3-hydroxyacyl-ACP as the acyl donor. Is involved in the biosynthesis of lipid A, a phosphorylated glycolipid that anchors the lipopolysaccharide to the outer membrane of the cell. This chain is UDP-3-O-acylglucosamine N-acyltransferase, found in Chlamydia pneumoniae (Chlamydophila pneumoniae).